The chain runs to 97 residues: Small ribosomal subunit protein bS16c (97 aa).

It belongs to the bacterial ribosomal protein bS16 family.

The protein resides in the plastid. The protein localises to the chloroplast. The polypeptide is Small ribosomal subunit protein bS16c (Piper cenocladum (Ant piper)).